Reading from the N-terminus, the 181-residue chain is Protein OPG005 (181 aa).

The polypeptide is Protein OPG005 (OPG005) (Vaccinia virus (strain Copenhagen) (VACV)).